Consider the following 75-residue polypeptide: Small ribosomal subunit protein bS21 (75 aa).

Residues 52–75 (RRARKLARKRAQREGLIGGRPGAR) form a disordered region. A compositionally biased stretch (basic residues) spans 53–62 (RARKLARKRA).

It belongs to the bacterial ribosomal protein bS21 family.

The sequence is that of Small ribosomal subunit protein bS21 from Brucella anthropi (strain ATCC 49188 / DSM 6882 / CCUG 24695 / JCM 21032 / LMG 3331 / NBRC 15819 / NCTC 12168 / Alc 37) (Ochrobactrum anthropi).